We begin with the raw amino-acid sequence, 659 residues long: mRNA export factor ICP27 homolog (659 aa).

Zn(2+) contacts are provided by Cys-130, His-266, Cys-268, and Cys-273. The segment at 130–273 (CMMSNGERPP…CEHACNDNAC (144 aa)) adopts a CHC2-type zinc-finger fold. The disordered stretch occupies residues 317–659 (GSFDDSRSAT…GEDGESDMTL (343 aa)). Over residues 324 to 336 (SATSGDGSSCSSA) the composition is skewed to low complexity. Residues 354–365 (SDQTDTSNNGTV) show a composition bias toward polar residues. Residues 387–397 (SPLDRPNDYHY) show a composition bias toward basic and acidic residues. The segment covering 413 to 427 (GSGSSSTEAVSTASA) has biased composition (low complexity). Residues 483 to 499 (SPERRSSEERSSSDQRR) are compositionally biased toward basic and acidic residues. Residues 503-513 (LSRSASATSGG) show a composition bias toward polar residues. Residues 553 to 575 (SRSNTPPSSPSKPDSAPAASASP) are compositionally biased toward low complexity. The span at 598 to 610 (ESVRVSERFETGD) shows a compositional bias: basic and acidic residues. Acidic residues-rich tracts occupy residues 617-628 (ETEDESDDEDDQ) and 646-659 (SETD…DMTL).

It belongs to the HHV-1 ICP27 protein family.

Its subcellular location is the virion tegument. It localises to the virion. It is found in the host nucleus. The protein localises to the host cytoplasm. In terms of biological role, immediate early (EI) protein that plays many roles during productive infection including regulation of viral gene expression and nuclear export of intronless viral RNAs. This chain is mRNA export factor ICP27 homolog, found in Elephantid herpesvirus 1 (isolate Asian elephant/Berlin/Kiba/1998) (EIHV-1).